Here is a 313-residue protein sequence, read N- to C-terminus: uncharacterized protein (313 aa).

This is an uncharacterized protein from Orgyia pseudotsugata multicapsid polyhedrosis virus (OpMNPV).